The following is an 84-amino-acid chain: Sec-independent protein translocase protein TatA (84 aa).

Residues 1-21 (MGGISIWQLLIVAVIVVLLFG) traverse the membrane as a helical segment. Composition is skewed to basic and acidic residues over residues 42–55 (AMSD…KTSQ) and 64–84 (IADK…KEQV). Residues 42 to 84 (AMSDDDAKQDKTSQDADFTAKSIADKQGEAKKEDAKSQDKEQV) form a disordered region.

Belongs to the TatA/E family. As to quaternary structure, the Tat system comprises two distinct complexes: a TatABC complex, containing multiple copies of TatA, TatB and TatC subunits, and a separate TatA complex, containing only TatA subunits. Substrates initially bind to the TatABC complex, which probably triggers association of the separate TatA complex to form the active translocon.

The protein localises to the cell inner membrane. In terms of biological role, part of the twin-arginine translocation (Tat) system that transports large folded proteins containing a characteristic twin-arginine motif in their signal peptide across membranes. TatA could form the protein-conducting channel of the Tat system. The protein is Sec-independent protein translocase protein TatA of Salmonella typhi.